The following is a 572-amino-acid chain: MGTCLKGNMSVLSLVLFLLSVQQFWAQEDPLLPFSEHLDLEHNVQLKWGFDKIQGTILFQLSVNTSGWISFGLSPNGGMTGADIVIGGVDNKGTYFTDRHALGNSMPVVDQKQNYKLLSLSESDGKTVMKFQRSIESCDENDLPVTILPMKLIYAYGETDDISYHKAQRGTKEVNLLKYMPRASLSNATYFDITMENFMLPANQTYYHCKTARAPTFDSKQHIYRIEPVITNYDLVHHLLLYRCPPTVTEPLELECYTKTERCMETIAVWGVGGGDFEFPEVAGLPIGGNVGDFFYRLEVHYNNVNKTAGRVDSSGLRFYYTSKLRQHDAGILMTGLAVIPSYAIPPKAKSFLTYGMCDTTYIPKVLETANDLQVFSVMMHTHLAGRKVRVGHFREGKQIDLLAVDENYNFEFQQVTNLGKTKTVKLGDKLLVECTYNTENRNTLTQGGLSTSDEMCLAFLFYYPAMNLSGCESLPHFSSLVSEMGAGDTGTWLYMMNTMAWNDSSINEYQQTLKKINQTVIVVNSFNKASITNGTIPDLKVSPPEPCVRACATKNLAFMSLFLCLAGMWAS.

A signal peptide spans 1–26 (MGTCLKGNMSVLSLVLFLLSVQQFWA). N-linked (GlcNAc...) asparagine glycosylation is found at Asn8, Asn64, Asn187, and Asn203. Residues 27-552 (QEDPLLPFSE…SPPEPCVRAC (526 aa)) are Extracellular-facing. In terms of domain architecture, DOMON spans 42-157 (HNVQLKWGFD…LPMKLIYAYG (116 aa)). Tyr207 is an active-site residue. Disulfide bonds link Cys209–Cys256 and Cys244–Cys263. Positions 237 and 238 each coordinate Cu cation. His301 contacts Cu cation. N-linked (GlcNAc...) asparagine glycosylation is present at Asn306. Disulfide bonds link Cys358–Cys472 and Cys435–Cys457. Residue His381 is part of the active site. Residues His381, His383, and Met456 each coordinate Cu cation. N-linked (GlcNAc...) asparagine glycans are attached at residues Asn468, Asn503, Asn518, and Asn534. A helical transmembrane segment spans residues 553-571 (ATKNLAFMSLFLCLAGMWA). Position 572 (Ser572) is a topological domain, cytoplasmic.

It belongs to the copper type II ascorbate-dependent monooxygenase family. Cu(2+) serves as cofactor.

The protein resides in the membrane. The protein is DBH-like monooxygenase protein 2 homolog (moxd2) of Danio rerio (Zebrafish).